The following is a 272-amino-acid chain: Shikimate dehydrogenase (NADP(+)) (272 aa).

Residues 14 to 16 (SLS) and Thr-61 each bind shikimate. Lys-65 acts as the Proton acceptor in catalysis. Asp-102 is a shikimate binding site. NADP(+) is bound by residues 127–131 (GAGGA), 151–156 (NRTPSK), and Leu-215. Position 217 (Tyr-217) interacts with shikimate. Gly-239 is an NADP(+) binding site.

The protein belongs to the shikimate dehydrogenase family. Homodimer.

It carries out the reaction shikimate + NADP(+) = 3-dehydroshikimate + NADPH + H(+). It participates in metabolic intermediate biosynthesis; chorismate biosynthesis; chorismate from D-erythrose 4-phosphate and phosphoenolpyruvate: step 4/7. In terms of biological role, involved in the biosynthesis of the chorismate, which leads to the biosynthesis of aromatic amino acids. Catalyzes the reversible NADPH linked reduction of 3-dehydroshikimate (DHSA) to yield shikimate (SA). This Coxiella burnetii (strain CbuG_Q212) (Coxiella burnetii (strain Q212)) protein is Shikimate dehydrogenase (NADP(+)).